The following is a 3008-amino-acid chain: Genome polyprotein (3008 aa).

Residue Ser2 is modified to N-acetylserine; by host. The segment at 2–23 is interaction with STAT1; the sequence is STNPKPQRKTKRNTNRRPMDVK. The interval 2–58 is interaction with EIF2AK2/PKR; it reads STNPKPQRKTKRNTNRRPMDVKFPGGGQIVGGVYLLPRRGPRLGVRATRKTSERSQP. The interaction with DDX3X stretch occupies residues 2–59; the sequence is STNPKPQRKTKRNTNRRPMDVKFPGGGQIVGGVYLLPRRGPRLGVRATRKTSERSQPR. Residues 2 to 75 form a disordered region; sequence STNPKPQRKT…PKARRPEGRS (74 aa). Topologically, residues 2-168 are cytoplasmic; sequence STNPKPQRKT…EDGINYATGN (167 aa). 2 short sequence motifs (nuclear localization signal) span residues 5–13 and 38–43; these read PKPQRKTKR and PRRGPR. A compositionally biased stretch (basic residues) spans 7-16; sequence PQRKTKRNTN. Residues 32–47 are compositionally biased toward low complexity; it reads GGVYLLPRRGPRLGVR. Residue Ser53 is modified to Phosphoserine; by host. 2 consecutive short sequence motifs (nuclear localization signal) follow at residues 58–64 and 66–71; these read PRGRRQP and PKARRP. The segment covering 58–68 has biased composition (basic residues); the sequence is PRGRRQPIPKA. 2 positions are modified to phosphoserine; by host: Ser99 and Ser116. Residues 112 to 152 form an important for endoplasmic reticulum and mitochondrial localization region; that stretch reads PRGRSRNLGKVIDTLTCGFADLMGYIPLVGAPVGSVARALA. Residues 122–173 are interaction with APOA2; it reads VIDTLTCGFADLMGYIPLVGAPVGSVARALAHGVRALEDGINYATGNLPGCS. The important for lipid droplets localization stretch occupies residues 164–167; the sequence is YATG. The chain crosses the membrane as a helical span at residues 169–189; that stretch reads LPGCSFSIFLLALLSCLTVPA. Residues 178–191 constitute a propeptide, ER anchor for the core protein, removed in mature form by host signal peptidase; the sequence is LLALLSCLTVPASA. Topologically, residues 190–358 are lumenal; it reads SAVNYRNVSG…SGGHWGVLVG (169 aa). Residues Asn196, Asn209, and Asn234 are each glycosylated (N-linked (GlcNAc...) asparagine; by host). The important for fusion stretch occupies residues 265 to 296; it reads MVGAATVCSGLYIGDLCGGLFLVGQMFSFRPR. N-linked (GlcNAc...) asparagine; by host glycosylation is present at Asn305. The chain crosses the membrane as a helical span at residues 359 to 379; it reads VAYFSMQANWAKVILVLFLFA. Over 380-725 the chain is Lumenal; that stretch reads GVDAETHVSG…WEYVVLAFLL (346 aa). The tract at residues 385-412 is HVR1; that stretch reads THVSGAAVGRSTAGLANLFSSGSKQNLQ. Asn417, Asn423, and Asn430 each carry an N-linked (GlcNAc...) (high mannose) asparagine; by host glycan. Intrachain disulfides connect Cys429–Cys553, Cys452–Cys459, Cys487–Cys495, and Cys504–Cys509. A glycan (N-linked (GlcNAc...) asparagine; by host) is linked at Asn448. Positions 475–479 are HVR2; sequence ANISG. Asn476 carries an N-linked (GlcNAc...) asparagine; by host glycan. The tract at residues 481 to 494 is CD81-binding 1; it reads SDDRPYCWHYAPRP. An N-linked (GlcNAc...) asparagine; by host glycan is attached at Asn533. The CD81-binding 2 stretch occupies residues 545–552; sequence PPHGAWFG. An N-linked (GlcNAc...) asparagine; by host glycan is attached at Asn557. 4 cysteine pairs are disulfide-bonded: Cys565–Cys570, Cys581–Cys585, Cys597–Cys620, and Cys607–Cys644. Residues Asn623 and Asn645 are each glycosylated (N-linked (GlcNAc...) (high mannose) asparagine; by host). Cys652 and Cys677 form a disulfide bridge. The PKR/eIF2-alpha phosphorylation homology domain (PePHD) stretch occupies residues 660–671; sequence VELSPLLLTTTA. The chain crosses the membrane as a helical span at residues 726–746; it reads LADARVSAYLWMMFMVSQVEA. Over 747–757 the chain is Lumenal; the sequence is ALSNLININAA. The helical transmembrane segment at 758 to 778 threads the bilayer; sequence SAAGAQGFWYAILFICIVWHV. Residues 779-782 lie on the Cytoplasmic side of the membrane; sequence KGRF. The chain crosses the membrane as a helical span at residues 783-803; that stretch reads PAAAAYAACGLWPCFLLLLML. At 804–813 the chain is on the lumenal side; sequence PERAYAYDQE. Residues 814–834 form a helical membrane-spanning segment; it reads VAGSLGGAIVVMLTILTLSPH. Residues 835 to 881 lie on the Cytoplasmic side of the membrane; it reads YKLWLARGLWWIQYFIARTEAVLHVYIPSFNVRGPRDSVIVLAVLVC. A helical transmembrane segment spans residues 882 to 902; sequence PDLVFDITKYLLAILGPLHIL. The Lumenal segment spans residues 903-928; that stretch reads QASLLRIPYFVRAQALVKICSLLRGV. The Peptidase C18 domain occupies 903 to 1026; sequence QASLLRIPYF…TETSKGWRLL (124 aa). Positions 904–1206 are protease NS2-3; sequence ASLLRIPYFV…PVESLETTMR (303 aa). Cys922 carries the S-palmitoyl cysteine; by host lipid modification. A helical membrane pass occupies residues 929 to 949; that stretch reads VYGKYFQMVVLKSRGLTGTYI. An interaction with host SCPS1 region spans residues 929–949; that stretch reads VYGKYFQMVVLKSRGLTGTYI. Residues 950-1657 lie on the Cytoplasmic side of the membrane; the sequence is YDHLTPMSDW…CMSADLEVVT (708 aa). Catalysis depends on for protease NS2 activity; shared with dimeric partner residues His952, Glu972, and Cys993. The Peptidase S29 domain maps to 1027-1208; sequence APITAYAQQT…ESLETTMRSP (182 aa). Residues His1083 and Asp1107 each act as charge relay system; for serine protease NS3 activity in the active site. 2 residues coordinate Zn(2+): Cys1123 and Cys1125. Ser1165 functions as the Charge relay system; for serine protease NS3 activity in the catalytic mechanism. Residues Cys1171 and His1175 each contribute to the Zn(2+) site. A Helicase ATP-binding domain is found at 1217 to 1369; sequence PAVPQTYQVA…SNIEEVALPT (153 aa). 1230-1237 contributes to the ATP binding site; it reads APTGSGKS. Residues Ser1237 and Glu1317 each coordinate Mg(2+). The DECH box motif lies at 1316–1319; the sequence is DECY. The segment at 1486 to 1498 is RNA-binding; it reads QRRGRTGRGRLGT. The chain crosses the membrane as a helical span at residues 1658-1678; that stretch reads STWVLVGGVLAALAAYCLSVG. An NS3-binding region spans residues 1679 to 1690; sequence SVVIVGRVVLSG. Residues 1679-1805 lie on the Cytoplasmic side of the membrane; sequence SVVIVGRVVL…AVTSPLTTQQ (127 aa). Residues 1806–1826 form a helical membrane-spanning segment; sequence TLLFNILGGWVASQIRDSDAS. Residues 1827–1828 are Lumenal-facing; the sequence is TA. A helical transmembrane segment spans residues 1829–1849; that stretch reads FVVSGLAGAAVGSVGLGKILV. Asp1850 is a topological domain (cytoplasmic). Residues 1851-1871 form a helical membrane-spanning segment; the sequence is ILPGYGAGVRGAVVTFKIMSG. The Lumenal portion of the chain corresponds to 1872–1881; that stretch reads EMPSTEDLVN. Residues 1882 to 1902 form a helical membrane-spanning segment; the sequence is LLPAILSPGALVVEVVCPAIL. Residues 1903–1972 are Cytoplasmic-facing; that stretch reads RRHVGPGEGA…WINEDCSTPC (70 aa). A lipid anchor (S-palmitoyl cysteine; by host) is attached at Cys1972. The stretch at 1973–2002 is an intramembrane region; it reads AESWLWEVWDWVLHVLSDFKTCLKAKFVPL. Over 2003–2987 the chain is Cytoplasmic; sequence MPGIPLLSWP…YHSMSHARPR (985 aa). Zn(2+)-binding residues include Cys2029, Cys2031, and Cys2052. The FKBP8-binding stretch occupies residues 2120 to 2208; that stretch reads ELFTEVDGIR…ASSSASQLSP (89 aa). Residues 2120–2329 are transcriptional activation; sequence ELFTEVDGIR…PVPSPRRKRT (210 aa). Residues 2135 to 2139 are interaction with non-structural protein 4A; the sequence is PKCKP. The interaction with host SKP2 stretch occupies residues 2189–2435; the sequence is RLARGSRPSL…ALVTPCAAEE (247 aa). Phosphoserine; by host is present on residues Ser2194, Ser2197, Ser2201, Ser2204, and Ser2207. The segment at 2210-2245 is ISDR; it reads LLQATCTAPHDSPGTDLLEANLLWGSTATRVETDEK. The interval 2210 to 2272 is interaction with EIF2AK2/PKR; it reads LLQATCTAPH…REVSVAAEIL (63 aa). The tract at residues 2245–2303 is NS4B-binding; it reads KVIILDSFESCVAEQNDDREVSVAAEILRPTKKFPPALPIWARPDYNPPLTETWKQQDY. The tract at residues 2296 to 2373 is V3; sequence ETWKQQDYQA…TPTETTDSGP (78 aa). Positions 2319 to 2322 match the SH3-binding motif; sequence PPVP. Residues 2324-2332 carry the Nuclear localization signal motif; it reads PRRKRTVQL. Residues 2346–2406 are disordered; the sequence is AKTFGQSEPS…DPDLTSDSWS (61 aa). A Glycyl lysine isopeptide (Lys-Gly) (interchain with G-Cter in ubiquitin) cross-link involves residue Lys2347. Ser2446 is subject to Phosphoserine; by host. In terms of domain architecture, RdRp catalytic spans 2631–2749; that stretch reads PMGFSYDTRC…IAESDGVEED (119 aa). The Mg(2+) site is built by Asp2637, Asp2735, and Asp2736. A helical membrane pass occupies residues 2988–3008; sequence YLLLCLLILTVGVGIFLLPAR.

This sequence belongs to the hepacivirus polyprotein family. In terms of assembly, homooligomer. Interacts with E1 (via C-terminus). Interacts with the non-structural protein 5A. Interacts (via N-terminus) with host STAT1 (via SH2 domain); this interaction results in decreased STAT1 phosphorylation and ubiquitin-mediated proteasome-dependent STAT1 degradation, leading to decreased IFN-stimulated gene transcription. Interacts with host STAT3; this interaction constitutively activates STAT3. Interacts with host LTBR receptor. Interacts with host TNFRSF1A receptor and possibly induces apoptosis. Interacts with host HNRPK. Interacts with host YWHAE. Interacts with host UBE3A/E6AP. Interacts with host DDX3X. Interacts with host APOA2. Interacts with host RXRA protein. Interacts with host SP110 isoform 3/Sp110b; this interaction sequesters the transcriptional corepressor SP110 away from the nucleus. Interacts with host CREB3 nuclear transcription protein; this interaction triggers cell transformation. Interacts with host ACY3. Interacts with host C1QR1. Interacts with host RBM24; this interaction, which enhances the interaction of the mature core protein with 5'-UTR, may inhibit viral translation and favor replication. Interacts with host EIF2AK2/PKR; this interaction induces the autophosphorylation of EIF2AK2. Part of the viral assembly initiation complex composed of NS2, E1, E2, NS3, NS4A, NS5A and the mature core protein. Forms a heterodimer with envelope glycoprotein E2. Interacts with mature core protein. Interacts with protease NS2. The heterodimer E1/E2 interacts with host CLDN1; this interaction plays a role in viral entry into host cell. Interacts with host SPSB2 (via C-terminus). Part of the viral assembly initiation complex composed of NS2, E1, E2, NS3, NS4A, NS5A and the mature core protein. Interacts with host NEURL3; this interaction prevents E1 binding to glycoprotein E2. As to quaternary structure, forms a heterodimer with envelope glycoprotein E1. Interacts with host CD81 and SCARB1 receptors; these interactions play a role in viral entry into host cell. Interacts with host EIF2AK2/PKR; this interaction inhibits EIF2AK2 and probably allows the virus to evade the innate immune response. Interacts with host CD209/DC-SIGN and CLEC4M/DC-SIGNR. Interact with host SPCS1; this interaction is essential for viral particle assembly. Interacts with protease NS2. The heterodimer E1/E2 interacts with host CLDN1; this interaction plays a role in viral entry into host cell. Part of the viral assembly initiation complex composed of NS2, E1, E2, NS3, NS4A, NS5A and the mature core protein. Interacts with host SLC3A2/4F2hc; the interaction may facilitate viral entry into host cell. Interacts with human PLSCR1. In terms of assembly, homohexamer. Homoheptamer. Interacts with protease NS2. Homodimer. Interacts with host SPCS1; this interaction is essential for viral particle assembly. Interacts with envelope glycoprotein E1. Interacts with envelope glycoprotein E2. Interacts with viroporin p7. Interacts with serine protease/helicase NS3. Part of the replication complex composed of NS2, NS3, NS4A, NS4B, NS5A and the RNA-directed RNA polymerase embedded in an ER-derived membranous web. Part of the viral assembly initiation complex composed of NS2, E1, E2, NS3, NS4A, NS5A and the mature core protein. As to quaternary structure, interacts with protease NS2. Interacts with non-structural protein 4A; this interaction stabilizes the folding of NS3 serine protease. NS3-NS4A interaction is essential for NS3 activation and allows membrane anchorage of the latter. NS3/NS4A complex also prevents phosphorylation of host IRF3, thus preventing the establishment of dsRNA induced antiviral state. Interacts with host MAVS; this interaction leads to the cleavage and inhibition of host MAVS. Interacts with host TICAM1; this interaction leads to the cleavage and inhibition of host TICAM1. Interacts with host TANK-binding kinase/TBK1; this interaction results in the inhibition of the association between TBK1 and IRF3, which leads to the inhibition of IRF3 activation. Interacts with host RBM24. Part of the replication complex composed of NS2, NS3, NS4A, NS4B, NS5A and the RNA-directed RNA polymerase embedded in an ER-derived membranous web. Part of the viral assembly initiation complex composed of NS2, E1, E2, NS3, NS4A, NS5A and the mature core protein. In terms of assembly, interacts with NS3 serine protease; this interaction stabilizes the folding of NS3 serine protease. NS3-NS4A interaction is essential for NS3 activation and allows membrane anchorage of the latter. Interacts with non-structural protein 5A (via N-terminus). Part of the replication complex composed of NS2, NS3, NS4A, NS4B, NS5A and the RNA-directed RNA polymerase embedded in an ER-derived membranous web. Part of the viral assembly initiation complex composed of NS2, E1, E2, NS3, NS4A, NS5A and the mature core protein. Homomultimer. Interacts with non-structural protein NS5A. Interacts with host PLA2G4C; this interaction likely initiates the recruitment of replication complexes to lipid droplets. Interacts with host STING; this interaction disrupts the interaction between STING and TBK1 thereby suppressing the interferon signaling. Part of the replication complex composed of NS2, NS3, NS4A, NS4B, NS5A and the RNA-directed RNA polymerase embedded in an ER-derived membranous web. As to quaternary structure, monomer. Homodimer; dimerization is required for RNA-binding. Interacts with the mature core protein. Interacts (via N-terminus) with non-structural protein 4A. Interacts with non-structural protein 4B. Interacts (via region D2) with RNA-directed RNA polymerase. Part of the viral assembly initiation complex composed of NS2, E1, E2, NS3, NS4A, NS5A and the mature core protein. Part of the replication complex composed of NS2, NS3, NS4A, NS4B, NS5A and the RNA-directed RNA polymerase embedded in an ER-derived membranous web. Interacts with host GRB2. Interacts with host BIN1. Interacts with host PIK3R1. Interacts with host SRCAP. Interacts with host FKBP8. Interacts (via C-terminus) with host VAPB (via MSP domain). Interacts with host EIF2AK2/PKR; this interaction leads to disruption of EIF2AK2 dimerization by NS5A and probably allows the virus to evade the innate immune response. Interacts (via N-terminus) with host PACSIN2 (via N-terminus); this interaction attenuates protein kinase C alpha-mediated phosphorylation of PACSIN2 by disrupting the interaction between PACSIN2 and PRKCA. Interacts (via N-terminus) with host SRC kinase (via SH2 domain). Interacts with most Src-family kinases. Interacts with host IFI27 and SKP2; promotes the ubiquitin-mediated proteasomal degradation of NS5A. Interacts with host GPS2. Interacts with host TNFRSF21; this interaction allows the modulation by the virus of JNK, p38 MAPK, STAT3, and Akt signaling pathways in a DR6-dependent manner. Interacts (via N-terminus) with host CIDEB (via N-terminus); this interaction seems to regulate the association of HCV particles with APOE. Interacts with host CHKA/Choline Kinase-alpha; CHKA bridges host PI4KA and NS5A and potentiates NS5A-stimulated PI4KA activity, which then facilitates the targeting of the ternary complex to the ER for viral replication. Interacts with host SPSB2 (via C-terminus); this interaction targets NS5A for ubiquitination and degradation. Interacts with host RAB18; this interaction may promote the association of NS5A and other replicase components with lipid droplets. Interacts (via region D2) with host PPIA/CYPA; the interaction stimulates RNA-binding ability of NS5A and is dependent on the peptidyl-prolyl cis-trans isomerase activity of PPIA/CYPA. Interacts with host TRIM14; this interaction induces the degradation of NS5A. In terms of assembly, homooligomer. Interacts with non-structural protein 5A. Interacts with host VAPB. Interacts with host PRK2/PKN2. Interacts with host HNRNPA1 and SEPT6; these interactions facilitate viral replication. Part of the replication complex composed of NS2, NS3, NS4A, NS4B, NS5A and the RNA-directed RNA polymerase. It depends on Zn(2+) as a cofactor. Mg(2+) is required as a cofactor. In terms of processing, specific enzymatic cleavages in vivo yield mature proteins. The structural proteins, core, E1, E2 and p7 are produced by proteolytic processing by host signal peptidases. The core protein precursor is synthesized as a 23 kDa, which is retained in the ER membrane through the hydrophobic signal peptide. Cleavage by the signal peptidase releases the 21 kDa mature core protein. The cleavage of the core protein precursor occurs between aminoacids 176 and 188 but the exact cleavage site is not known. Some degraded forms of the core protein appear as well during the course of infection. The other proteins (p7, NS2, NS3, NS4A, NS4B, NS5A and NS5B) are cleaved by the viral proteases. Autoprocessing between NS2 and NS3 is mediated by the NS2 cysteine protease catalytic domain and regulated by the NS3 N-terminal domain. Post-translationally, phosphorylated by host PKC and PKA. Ubiquitinated; mediated by UBE3A and leading to core protein subsequent proteasomal degradation. In terms of processing, highly N-glycosylated. Post-translationally, palmitoylation is required for NS2/3 autoprocessing and E2 recruitment to membranes. Palmitoylated. This modification may play a role in its polymerization or in protein-protein interactions. In terms of processing, phosphorylated on serines in a basal form termed p56. p58 is a hyperphosphorylated form of p56. p56 and p58 coexist in the cell in roughly equivalent amounts. Hyperphosphorylation is dependent on the presence of NS4A. Host CSNK1A1/CKI-alpha or RPS6KB1 kinases may be responsible for NS5A phosphorylation. Post-translationally, tyrosine phosphorylation is essential for the interaction with host SRC. The N-terminus is phosphorylated by host PRK2/PKN2.

The protein localises to the host endoplasmic reticulum membrane. It localises to the host mitochondrion membrane. It is found in the virion. The protein resides in the host cytoplasm. Its subcellular location is the host nucleus. The protein localises to the host lipid droplet. It localises to the virion membrane. It is found in the host mitochondrion. The protein resides in the host cell membrane. Its subcellular location is the host perinuclear region. It catalyses the reaction Hydrolysis of four peptide bonds in the viral precursor polyprotein, commonly with Asp or Glu in the P6 position, Cys or Thr in P1 and Ser or Ala in P1'.. It carries out the reaction a ribonucleoside 5'-triphosphate + H2O = a ribonucleoside 5'-diphosphate + phosphate + H(+). The catalysed reaction is ATP + H2O = ADP + phosphate + H(+). The enzyme catalyses RNA(n) + a ribonucleoside 5'-triphosphate = RNA(n+1) + diphosphate. Inhibited by the antiviral drug hexamethylene amiloride. Inhibition by amantadine appears to be genotype-dependent. Also inhibited by long-alkyl-chain iminosugar derivatives. Its activity is regulated as follows. Activity is up-regulated by PRK2/PKN2-mediated phosphorylation. Functionally, packages viral RNA to form a viral nucleocapsid, and promotes virion budding. Participates in the viral particle production as a result of its interaction with the non-structural protein 5A. Binds RNA and may function as a RNA chaperone to induce the RNA structural rearrangements taking place during virus replication. Modulates viral translation initiation by interacting with viral IRES and 40S ribosomal subunit. Affects various cell signaling pathways, host immunity and lipid metabolism. Prevents the establishment of cellular antiviral state by blocking the interferon-alpha/beta (IFN-alpha/beta) and IFN-gamma signaling pathways and by blocking the formation of phosphorylated STAT1 and promoting ubiquitin-mediated proteasome-dependent degradation of STAT1. Activates STAT3 leading to cellular transformation. Regulates the activity of cellular genes, including c-myc and c-fos. May repress the promoter of p53, and sequester CREB3 and SP110 isoform 3/Sp110b in the cytoplasm. Represses cell cycle negative regulating factor CDKN1A, thereby interrupting an important check point of normal cell cycle regulation. Targets transcription factors involved in the regulation of inflammatory responses and in the immune response: suppresses TNF-induced NF-kappa-B activation, and activates AP-1. Binds to dendritic cells (DCs) via C1QR1, resulting in down-regulation of T-lymphocytes proliferation. Alters lipid metabolism by interacting with hepatocellular proteins involved in lipid accumulation and storage. Induces up-regulation of FAS promoter activity, and thereby contributes to the increased triglyceride accumulation in hepatocytes (steatosis). Its function is as follows. Forms a heterodimer with envelope glycoprotein E2, which mediates virus attachment to the host cell, virion internalization through clathrin-dependent endocytosis and fusion with host membrane. Fusion with the host cell is most likely mediated by both E1 and E2, through conformational rearrangements of the heterodimer required for fusion rather than a classical class II fusion mechanism. E1/E2 heterodimer binds host apolipoproteins such as APOB and ApoE thereby forming a lipo-viro-particle (LVP). APOE associated to the LVP allows the initial virus attachment to cell surface receptors such as the heparan sulfate proteoglycans (HSPGs), syndecan-1 (SDC1), syndecan-1 (SDC2), the low-density lipoprotein receptor (LDLR) and scavenger receptor class B type I (SCARB1). The cholesterol transfer activity of SCARB1 allows E2 exposure and binding of E2 to SCARB1 and the tetraspanin CD81. E1/E2 heterodimer binding on CD81 activates the epithelial growth factor receptor (EGFR) signaling pathway. Diffusion of the complex E1-E2-EGFR-SCARB1-CD81 to the cell lateral membrane allows further interaction with Claudin 1 (CLDN1) and occludin (OCLN) to finally trigger HCV entry. Forms a heterodimer with envelope glycoprotein E1, which mediates virus attachment to the host cell, virion internalization through clathrin-dependent endocytosis and fusion with host membrane. Fusion with the host cell is most likely mediated by both E1 and E2, through conformational rearrangements of the heterodimer required for fusion rather than a classical class II fusion mechanism. The interaction between envelope glycoprotein E2 and host apolipoprotein E/APOE allows the proper assembly, maturation and infectivity of the viral particles. This interaction is probably promoted via the up-regulation of cellular autophagy by the virus. E1/E2 heterodimer binds host apolipoproteins such as APOB and APOE thereby forming a lipo-viro-particle (LVP). APOE associated to the LVP allows the initial virus attachment to cell surface receptors such as the heparan sulfate proteoglycans (HSPGs), syndecan-1 (SDC1), syndecan-1 (SDC2), the low-density lipoprotein receptor (LDLR) and scavenger receptor class B type I (SCARB1). The cholesterol transfer activity of SCARB1 allows E2 exposure and binding of E2 to SCARB1 and the tetraspanin CD81. E1/E2 heterodimer binding on CD81 activates the epithelial growth factor receptor (EGFR) signaling pathway. Diffusion of the complex E1-E2-EGFR-SCARB1-CD81 to the cell lateral membrane allows further interaction with Claudin 1 (CLDN1) and occludin (OCLN) to finally trigger HCV entry. Inhibits host EIF2AK2/PKR activation, preventing the establishment of an antiviral state. Viral ligand for CD209/DC-SIGN and CLEC4M/DC-SIGNR, which are respectively found on dendritic cells (DCs), and on liver sinusoidal endothelial cells and macrophage-like cells of lymph node sinuses. These interactions allow the capture of circulating HCV particles by these cells and subsequent facilitated transmission to permissive cells such as hepatocytes and lymphocyte subpopulations. The interaction between E2 and host amino acid transporter complex formed by SLC3A2 and SLC7A5/LAT1 may facilitate viral entry into host cell. In terms of biological role, ion channel protein that acts as a viroporin and plays an essential role in the assembly, envelopment and secretion of viral particles. Regulates the host cell secretory pathway, which induces the intracellular retention of viral glycoproteins and favors assembly of viral particles. Creates a pore in acidic organelles and releases Ca(2+) and H(+) in the cytoplasm of infected cells, leading to a productive viral infection. High levels of cytoplasmic Ca(2+) may trigger membrane trafficking and transport of viral ER-associated proteins to viroplasms, sites of viral genome replication. This ionic imbalance induces the assembly of the inflammasome complex, which triggers the maturation of pro-IL-1beta into IL-1beta through the action of caspase-1. Targets also host mitochondria and induces mitochondrial depolarization. In addition of its role as a viroporin, acts as a lipid raft adhesion factor. Functionally, cysteine protease required for the proteolytic auto-cleavage between the non-structural proteins NS2 and NS3. The N-terminus of NS3 is required for the function of NS2 protease (active region NS2-3). Promotes the initiation of viral particle assembly by mediating the interaction between structural and non-structural proteins. Its function is as follows. Displays three enzymatic activities: serine protease with a chymotrypsin-like fold, NTPase and RNA helicase. NS3 serine protease, in association with NS4A, is responsible for the cleavages of NS3-NS4A, NS4A-NS4B, NS4B-NS5A and NS5A-NS5B. The NS3/NS4A complex prevents phosphorylation of host IRF3, thus preventing the establishment of dsRNA induced antiviral state. The NS3/NS4A complex induces host amino acid transporter component SLC3A2, thus contributing to HCV propagation. NS3 RNA helicase binds to RNA and unwinds both dsDNA and dsRNA in the 3' to 5' direction, and likely resolves RNA complicated stable secondary structures in the template strand. Binds a single ATP and catalyzes the unzipping of a single base pair of dsRNA. Inhibits host antiviral proteins TBK1 and IRF3 thereby preventing the establishment of an antiviral state. Cleaves host MAVS/CARDIF thereby preventing the establishment of an antiviral state. Cleaves host TICAM1/TRIF, thereby disrupting TLR3 signaling and preventing the establishment of an antiviral state. Induces a specific membrane alteration that serves as a scaffold for the virus replication complex. This membrane alteration gives rise to the so-called ER-derived membranous web that contains the replication complex. NS4B self-interaction contributes to its function in membranous web formation. Promotes host TRIF protein degradation in a CASP8-dependent manner thereby inhibiting host TLR3-mediated interferon signaling. Disrupts the interaction between STING and TBK1 contributing to the inhibition of interferon signaling. In terms of biological role, phosphorylated protein that is indispensable for viral replication and assembly. Both hypo- and hyperphosphorylated states are required for the viral life cycle. The hyperphosphorylated form of NS5A is an inhibitor of viral replication. Involved in RNA-binding and especially in binding to the viral genome. Zinc is essential for RNA-binding. Participates in the viral particle production as a result of its interaction with the mature viral core protein. Its interaction with host VAPB may target the viral replication complex to vesicles. Down-regulates viral IRES translation initiation. Mediates interferon resistance, presumably by interacting with and inhibiting host EIF2AK2/PKR. Prevents BIN1-induced apoptosis. Acts as a transcriptional activator of some host genes important for viral replication when localized in the nucleus. Via the interaction with host PACSIN2, modulates lipid droplet formation in order to promote virion assembly. Modulates TNFRSF21/DR6 signaling pathway for viral propagation. Functionally, RNA-dependent RNA polymerase that performs primer-template recognition and RNA synthesis during viral replication. Initiates RNA transcription/replication at a flavin adenine dinucleotide (FAD), resulting in a 5'- FAD cap on viral RNAs. In this way, recognition of viral 5' RNA by host pattern recognition receptors can be bypassed, thereby evading activation of antiviral pathways. The polypeptide is Genome polyprotein (Homo sapiens (Human)).